The chain runs to 453 residues: Bifunctional protein GlmU (453 aa).

Residues 1–227 (MNKLSVVILA…LMEVEGVNNR (227 aa)) form a pyrophosphorylase region. Residues 9–12 (LAAG), Lys23, Gln74, 79–80 (GT), 101–103 (YGD), Gly138, Glu152, Asn167, and Asn225 each bind UDP-N-acetyl-alpha-D-glucosamine. Residue Asp103 participates in Mg(2+) binding. Mg(2+) is bound at residue Asn225. A linker region spans residues 228–248 (LQLANLERHFQRKQVEKLLLA). Residues 249-453 (GVTFADPARF…ISNWQRPKRK (205 aa)) form an N-acetyltransferase region. Arg331 and Lys349 together coordinate UDP-N-acetyl-alpha-D-glucosamine. The Proton acceptor role is filled by His361. Residues Tyr364 and Asn375 each coordinate UDP-N-acetyl-alpha-D-glucosamine. Acetyl-CoA is bound by residues Ala378, 384–385 (NY), Ser403, Ala421, and Arg438.

The protein in the N-terminal section; belongs to the N-acetylglucosamine-1-phosphate uridyltransferase family. This sequence in the C-terminal section; belongs to the transferase hexapeptide repeat family. In terms of assembly, homotrimer. Mg(2+) serves as cofactor.

The protein resides in the cytoplasm. It carries out the reaction alpha-D-glucosamine 1-phosphate + acetyl-CoA = N-acetyl-alpha-D-glucosamine 1-phosphate + CoA + H(+). The enzyme catalyses N-acetyl-alpha-D-glucosamine 1-phosphate + UTP + H(+) = UDP-N-acetyl-alpha-D-glucosamine + diphosphate. The protein operates within nucleotide-sugar biosynthesis; UDP-N-acetyl-alpha-D-glucosamine biosynthesis; N-acetyl-alpha-D-glucosamine 1-phosphate from alpha-D-glucosamine 6-phosphate (route II): step 2/2. Its pathway is nucleotide-sugar biosynthesis; UDP-N-acetyl-alpha-D-glucosamine biosynthesis; UDP-N-acetyl-alpha-D-glucosamine from N-acetyl-alpha-D-glucosamine 1-phosphate: step 1/1. It participates in bacterial outer membrane biogenesis; LPS lipid A biosynthesis. In terms of biological role, catalyzes the last two sequential reactions in the de novo biosynthetic pathway for UDP-N-acetylglucosamine (UDP-GlcNAc). The C-terminal domain catalyzes the transfer of acetyl group from acetyl coenzyme A to glucosamine-1-phosphate (GlcN-1-P) to produce N-acetylglucosamine-1-phosphate (GlcNAc-1-P), which is converted into UDP-GlcNAc by the transfer of uridine 5-monophosphate (from uridine 5-triphosphate), a reaction catalyzed by the N-terminal domain. The chain is Bifunctional protein GlmU from Histophilus somni (strain 129Pt) (Haemophilus somnus).